The sequence spans 435 residues: UPF0597 protein ASA_0240 (435 aa).

Belongs to the UPF0597 family.

The polypeptide is UPF0597 protein ASA_0240 (Aeromonas salmonicida (strain A449)).